A 520-amino-acid chain; its full sequence is Sensory neuron membrane protein 1 (520 aa).

At 1-5 the chain is on the cytoplasmic side; the sequence is MKPKK. The helical transmembrane segment at 6-26 threads the bilayer; the sequence is LGIIGGSLLAFGILICAIAFP. Topologically, residues 27–451 are extracellular; it reads PFLRSQVKKQ…KLKTVFKTIS (425 aa). N-linked (GlcNAc...) asparagine glycosylation is found at N64, N224, and N268. Cystine bridges form between C264–C329, C293–C348, and C331–C337. Residues 452–472 traverse the membrane as a helical segment; that stretch reads IVGFMKWFTIVSGTCVSGAAA. Over 473-520 the chain is Cytoplasmic; that stretch reads ALFFKNKDKNKLDITKVTPQKGEEKKWPNQMTISTIQSAAVPPNLDAD.

This sequence belongs to the CD36 family.

The protein localises to the cell membrane. Its function is as follows. Plays an olfactory role that is not restricted to pheromone sensitivity. The protein is Sensory neuron membrane protein 1 of Apis mellifera (Honeybee).